A 213-amino-acid chain; its full sequence is MHKYSKEIPFPETKFFTSIAKLDEKEDLDSVQSIAFMGRSNSGKSSLLNALSNHRGLAKVSRTPGKTKLINIFRTKVGFNLVDLPGFGYSKASHKEHKDMMNLLEGFLNSWKQLKILFILCDSQRDFPEEELSTIEVAMEKKIKPVVIRTKIDKLNQSGQHKVRTEMEAAMNEIGIPFRVFYISASTGRGIGELREFILETLGIQTKVSNVEP.

One can recognise an EngB-type G domain in the interval 30–204; sequence SVQSIAFMGR…REFILETLGI (175 aa). GTP-binding positions include 38–45, 65–69, 83–86, 150–153, and 183–185; these read GRSNSGKS, GKTKL, DLPG, TKID, and ISA. The Mg(2+) site is built by Ser-45 and Thr-67.

Belongs to the TRAFAC class TrmE-Era-EngA-EngB-Septin-like GTPase superfamily. EngB GTPase family. Mg(2+) serves as cofactor.

Necessary for normal cell division and for the maintenance of normal septation. The chain is Probable GTP-binding protein EngB from Leptospira biflexa serovar Patoc (strain Patoc 1 / Ames).